The chain runs to 412 residues: Phosphoglycerate kinase, plasmid (412 aa).

Residues 39–41 (DLN), Arg55, 78–81 (HLGR), Arg133, and Arg166 contribute to the substrate site. ATP-binding positions include Lys217, Glu339, and 365 to 368 (GGDT).

It belongs to the phosphoglycerate kinase family. Monomer.

It localises to the cytoplasm. The enzyme catalyses (2R)-3-phosphoglycerate + ATP = (2R)-3-phospho-glyceroyl phosphate + ADP. It functions in the pathway carbohydrate biosynthesis; Calvin cycle. The sequence is that of Phosphoglycerate kinase, plasmid (cbbKP) from Cupriavidus necator (strain ATCC 17699 / DSM 428 / KCTC 22496 / NCIMB 10442 / H16 / Stanier 337) (Ralstonia eutropha).